Here is a 110-residue protein sequence, read N- to C-terminus: Insulin (110 aa).

The signal sequence occupies residues 1-24 (MALWMHLLTVLALLALWGPNTGQA). 3 disulfide bridges follow: Cys31–Cys96, Cys43–Cys109, and Cys95–Cys100. Positions 57–87 (ELEDPQVEQTELGMGLGAGGLQPLALEMALQ) are cleaved as a propeptide — c peptide.

Belongs to the insulin family. As to quaternary structure, heterodimer of a B chain and an A chain linked by two disulfide bonds.

Its subcellular location is the secreted. Functionally, insulin decreases blood glucose concentration. It increases cell permeability to monosaccharides, amino acids and fatty acids. It accelerates glycolysis, the pentose phosphate cycle, and glycogen synthesis in liver. The chain is Insulin (INS) from Cavia porcellus (Guinea pig).